Here is a 284-residue protein sequence, read N- to C-terminus: Chaperone protein dnaJ 6 (284 aa).

Disordered stretches follow at residues 1–30, 196–221, and 252–284; these read MGRK…ETSL, NKIS…AKDS, and GGDA…SRGK. Residues 3 to 6 carry the Nuclear localization signal motif; the sequence is RKKK. A J domain is found at 29–94; the sequence is SLYEVLGVER…EKRAVYDQTG (66 aa). Residues 209–215 carry the Nuclear localization signal motif; the sequence is RKRKKKK. A compositionally biased stretch (acidic residues) spans 255–265; that stretch reads AEAEPTEEEFE. The span at 266 to 275 shows a compositional bias: basic and acidic residues; that stretch reads AAQRRIESKR.

This sequence belongs to the DnaJ family. C/III subfamily. Highly expressed in leaves, flowers and siliques, and to lower extent in roots.

It is found in the nucleus. Functionally, plays a continuous role in plant development probably in the structural organization of compartments. In Arabidopsis thaliana (Mouse-ear cress), this protein is Chaperone protein dnaJ 6 (ATJ6).